We begin with the raw amino-acid sequence, 136 residues long: Protein PsiE homolog (136 aa).

The next 4 membrane-spanning stretches (helical) occupy residues 15-35 (AMQT…IVFL), 58-78 (VEGL…VKYF), 83-103 (HFPL…LIII), and 108-128 (PMAV…LWLC).

The protein belongs to the PsiE family.

The protein localises to the cell inner membrane. The chain is Protein PsiE homolog from Klebsiella pneumoniae (strain 342).